The chain runs to 157 residues: Cell cycle regulator of non-homologous end joining (157 aa).

Methionine 1 bears the N-acetylmethionine mark. The KBM motif lies at 1-21 (METLQSETKTRVLPSWLTAQV). The segment at 77–147 (KACEQPALAG…SPEEEEEEDV (71 aa)) is disordered. Low complexity predominate over residues 98-107 (VSPHTSSGSS). Residues 123 to 136 (SPSQRPGGSSSACS) are compositionally biased toward polar residues. The XLM motif lies at 147-157 (VLKYVREIFFS).

In terms of assembly, interacts (via KBM motif) with XRCC5/Ku80 and XRCC6/Ku70 heterodimer. Interacts (via XLF motif) with TRIM28/KAP1, ATM, MRE11, NBN and RAD50. Interacts with splicing factor SF3B1. Interacts with ERCC6L2; this interaction is DNA independent. As to quaternary structure, does not interact with XRCC5/Ku80 and XRCC6/Ku70 heterodimer. Interacts (via KBM motif) with XRCC5/Ku80 and XRCC6/Ku70 heterodimer.

It is found in the cytoplasm. The protein resides in the nucleus. The protein localises to the chromosome. Its function is as follows. Cell-cycle-specific regulator of classical non-homologous end joining (NHEJ) of DNA double-strand break (DSB) repair, which can act both as an activator or inhibitor of NHEJ, depending on the cell cycle phase. Acts as a regulator of DNA repair pathway choice by specifically inhibiting classical NHEJ during the S and G2 phases, thereby promoting error-free repair by homologous recombination during cell cycle phases when sister chromatids are present. Preferentially protects single-stranded overhangs at break sites by inhibiting classical NHEJ, thereby creating a local environment that favors homologous recombination. Acts via interaction with XRCC5/Ku80 and XRCC6/Ku70. In contrast, acts as an activator of NHEJ during G1 phase of the cell cycle: promotes classical NHEJ in G1 phase cells via multivalent interactions that increase the affinity of DNA damage response proteins for DSB-associated chromatin. Also involved in immunoglobulin V(D)J recombination. May also act as an indirect regulator of proteasome. The polypeptide is Cell cycle regulator of non-homologous end joining (Homo sapiens (Human)).